The following is a 103-amino-acid chain: U-scoloptoxin(24)-Er1a (103 aa).

The first 23 residues, 1–23, serve as a signal peptide directing secretion; sequence MVKSLHCLIGIVLFLAILNAGNG.

This sequence belongs to the scoloptoxin-24 family. Contains 1 disulfide bond. Expressed by the venom gland.

It localises to the secreted. In Ethmostigmus rubripes (Giant centipede), this protein is U-scoloptoxin(24)-Er1a.